The primary structure comprises 150 residues: FAD synthase (150 aa).

Residues 11-12, 16-19, D96, and Y124 contribute to the ATP site; these read TF and HPGH.

This sequence belongs to the archaeal FAD synthase family. In terms of assembly, homodimer. The cofactor is a divalent metal cation.

It carries out the reaction FMN + ATP + H(+) = FAD + diphosphate. Its pathway is cofactor biosynthesis; FAD biosynthesis; FAD from FMN: step 1/1. Functionally, catalyzes the transfer of the AMP portion of ATP to flavin mononucleotide (FMN) to produce flavin adenine dinucleotide (FAD) coenzyme. The polypeptide is FAD synthase (Methanococcus maripaludis (strain DSM 14266 / JCM 13030 / NBRC 101832 / S2 / LL)).